The chain runs to 164 residues: Zinc finger protein ZAT8 (164 aa).

2 C2H2-type zinc fingers span residues 37 to 59 and 85 to 107; these read FRCK…RASH and HPCP…MRRH.

Its subcellular location is the nucleus. In terms of biological role, probable transcription factor that may be involved in stress responses. This is Zinc finger protein ZAT8 (ZAT8) from Arabidopsis thaliana (Mouse-ear cress).